A 330-amino-acid chain; its full sequence is Glycerol-3-phosphate dehydrogenase [NAD(P)+] 1 (330 aa).

W15, R35, and K105 together coordinate NADPH. Sn-glycerol 3-phosphate contacts are provided by K105, G133, and T135. NADPH is bound at residue A137. Sn-glycerol 3-phosphate is bound by residues K188, D241, S251, R252, and N253. K188 (proton acceptor) is an active-site residue. An NADPH-binding site is contributed by R252. NADPH-binding residues include I276 and E278.

This sequence belongs to the NAD-dependent glycerol-3-phosphate dehydrogenase family.

Its subcellular location is the cytoplasm. The catalysed reaction is sn-glycerol 3-phosphate + NAD(+) = dihydroxyacetone phosphate + NADH + H(+). It carries out the reaction sn-glycerol 3-phosphate + NADP(+) = dihydroxyacetone phosphate + NADPH + H(+). It participates in membrane lipid metabolism; glycerophospholipid metabolism. Functionally, catalyzes the reduction of the glycolytic intermediate dihydroxyacetone phosphate (DHAP) to sn-glycerol 3-phosphate (G3P), the key precursor for phospholipid synthesis. This chain is Glycerol-3-phosphate dehydrogenase [NAD(P)+] 1, found in Sphingopyxis alaskensis (strain DSM 13593 / LMG 18877 / RB2256) (Sphingomonas alaskensis).